The following is a 146-amino-acid chain: uncharacterized protein (146 aa).

Positions 1-137 (MLSQEFFNSF…TINVMNQIHK (137 aa)) constitute an HTH marR-type domain.

This is an uncharacterized protein from Staphylococcus aureus (strain MW2).